We begin with the raw amino-acid sequence, 227 residues long: ATP-dependent dethiobiotin synthetase BioD (227 aa).

ATP is bound at residue 13–18; sequence DVGKTV. Residue Thr17 participates in Mg(2+) binding. The active site involves Lys38. ATP contacts are provided by residues Asp55, 116-119, and 176-177; these read EGAG and NR. Asp55 and Glu116 together coordinate Mg(2+).

The protein belongs to the dethiobiotin synthetase family. Homodimer. It depends on Mg(2+) as a cofactor.

It is found in the cytoplasm. It catalyses the reaction (7R,8S)-7,8-diammoniononanoate + CO2 + ATP = (4R,5S)-dethiobiotin + ADP + phosphate + 3 H(+). It participates in cofactor biosynthesis; biotin biosynthesis; biotin from 7,8-diaminononanoate: step 1/2. Functionally, catalyzes a mechanistically unusual reaction, the ATP-dependent insertion of CO2 between the N7 and N8 nitrogen atoms of 7,8-diaminopelargonic acid (DAPA, also called 7,8-diammoniononanoate) to form a ureido ring. This Aliivibrio salmonicida (strain LFI1238) (Vibrio salmonicida (strain LFI1238)) protein is ATP-dependent dethiobiotin synthetase BioD.